Consider the following 119-residue polypeptide: Protein TusC (119 aa).

This sequence belongs to the DsrF/TusC family. In terms of assembly, heterohexamer, formed by a dimer of trimers. The hexameric TusBCD complex contains 2 copies each of TusB, TusC and TusD. The TusBCD complex interacts with TusE.

The protein resides in the cytoplasm. Functionally, part of a sulfur-relay system required for 2-thiolation of 5-methylaminomethyl-2-thiouridine (mnm(5)s(2)U) at tRNA wobble positions. The sequence is that of Protein TusC from Pectobacterium carotovorum subsp. carotovorum (strain PC1).